The primary structure comprises 206 residues: Large ribosomal subunit protein eL8 (206 aa).

The protein belongs to the eukaryotic ribosomal protein eL8 family. As to quaternary structure, component of the large ribosomal subunit.

The protein resides in the cytoplasm. The chain is Large ribosomal subunit protein eL8 (RPL7A) from Encephalitozoon cuniculi (strain GB-M1) (Microsporidian parasite).